The chain runs to 259 residues: MNLVDLWLSRSLSMCLLLQSFVLMILCFHSASMCPKGCLCSSSGGLNVTCSNANLKEIPRDLPPETVLLYLDSNQITSIPNEIFKDLHQLRVLNLSKNGIEFIDEHAFKGVAETLQTLDLSDNRIQSVHKNAFNNLKARARIANNPWHCDCTLQQVLRSMASNHETAHNVICKTSVLDEHAGRPFLNAANDADLCNLPKKTTDYAMLVTMFGWFTMVISYVVYYVRQNQEDARRHLEYLKSLPSRQKKADEPDDISTVV.

Positions 1 to 33 are cleaved as a signal peptide; that stretch reads MNLVDLWLSRSLSMCLLLQSFVLMILCFHSASM. An LRRNT domain is found at 34-64; the sequence is CPKGCLCSSSGGLNVTCSNANLKEIPRDLPP. N47 carries N-linked (GlcNAc...) asparagine glycosylation. LRR repeat units lie at residues 65 to 86, 89 to 110, and 114 to 135; these read ETVL…IFKD, QLRV…AFKG, and TLQT…AFNN. Residue N94 is glycosylated (N-linked (GlcNAc...) asparagine). Positions 145–197 constitute an LRRCT domain; the sequence is NPWHCDCTLQQVLRSMASNHETAHNVICKTSVLDEHAGRPFLNAANDADLCNL. The chain crosses the membrane as a helical span at residues 205–225; that stretch reads AMLVTMFGWFTMVISYVVYYV.

It belongs to the LRRC3 family.

The protein resides in the membrane. The protein is Leucine-rich repeat-containing protein 3B (Lrrc3b) of Mus musculus (Mouse).